The following is a 206-amino-acid chain: MYNKLQYISQGKTIEEQLLNIRKALENGCQWIQMRFKDTHSDNVFTLAEAVKRMCQEYTATFIINDNVYLAKKINADGVHLGLNDMNIAEARTILGEAKIIGGTANTFEEVLQRTAENCNYIGLGPFQFTATKEKLSPVLGLEGYHLIIQQMKTKKNKIPIYAIGGIQLENVDDIMKTGIYGIAVSGLITQSENPFQLITQLNKKL.

4-amino-2-methyl-5-(diphosphooxymethyl)pyrimidine-binding positions include 33 to 37 (QMRFK) and Asn65. Positions 66 and 85 each coordinate Mg(2+). Residue Thr104 participates in 4-amino-2-methyl-5-(diphosphooxymethyl)pyrimidine binding. 130–132 (TAT) contacts 2-[(2R,5Z)-2-carboxy-4-methylthiazol-5(2H)-ylidene]ethyl phosphate. Lys133 lines the 4-amino-2-methyl-5-(diphosphooxymethyl)pyrimidine pocket. Residue Gly166 participates in 2-[(2R,5Z)-2-carboxy-4-methylthiazol-5(2H)-ylidene]ethyl phosphate binding.

The protein belongs to the thiamine-phosphate synthase family. Mg(2+) is required as a cofactor.

It catalyses the reaction 2-[(2R,5Z)-2-carboxy-4-methylthiazol-5(2H)-ylidene]ethyl phosphate + 4-amino-2-methyl-5-(diphosphooxymethyl)pyrimidine + 2 H(+) = thiamine phosphate + CO2 + diphosphate. The enzyme catalyses 2-(2-carboxy-4-methylthiazol-5-yl)ethyl phosphate + 4-amino-2-methyl-5-(diphosphooxymethyl)pyrimidine + 2 H(+) = thiamine phosphate + CO2 + diphosphate. The catalysed reaction is 4-methyl-5-(2-phosphooxyethyl)-thiazole + 4-amino-2-methyl-5-(diphosphooxymethyl)pyrimidine + H(+) = thiamine phosphate + diphosphate. It functions in the pathway cofactor biosynthesis; thiamine diphosphate biosynthesis; thiamine phosphate from 4-amino-2-methyl-5-diphosphomethylpyrimidine and 4-methyl-5-(2-phosphoethyl)-thiazole: step 1/1. Functionally, condenses 4-methyl-5-(beta-hydroxyethyl)thiazole monophosphate (THZ-P) and 2-methyl-4-amino-5-hydroxymethyl pyrimidine pyrophosphate (HMP-PP) to form thiamine monophosphate (TMP). The chain is Thiamine-phosphate synthase from Flavobacterium psychrophilum (strain ATCC 49511 / DSM 21280 / CIP 103535 / JIP02/86).